The sequence spans 411 residues: Glutamyl-tRNA reductase (411 aa).

Residues T48–R51, S106, E111–Q113, and Q117 contribute to the substrate site. The active-site Nucleophile is the C49. G186–G191 serves as a coordination point for NADP(+).

Belongs to the glutamyl-tRNA reductase family. As to quaternary structure, homodimer.

It catalyses the reaction (S)-4-amino-5-oxopentanoate + tRNA(Glu) + NADP(+) = L-glutamyl-tRNA(Glu) + NADPH + H(+). It functions in the pathway porphyrin-containing compound metabolism; protoporphyrin-IX biosynthesis; 5-aminolevulinate from L-glutamyl-tRNA(Glu): step 1/2. In terms of biological role, catalyzes the NADPH-dependent reduction of glutamyl-tRNA(Glu) to glutamate 1-semialdehyde (GSA). The polypeptide is Glutamyl-tRNA reductase (Clostridium novyi (strain NT)).